The sequence spans 478 residues: Metalloendopeptidase OMA1, mitochondrial (478 aa).

The segment at 134–164 (LGRSIRKWWVALPANKKQLFREWSWRRRWHF) is stress-sensor region. Residues 163–183 (HFLGAGTGLLFIASLFFFTHL) traverse the membrane as a helical segment. Residue His-296 participates in Zn(2+) binding. Glu-297 is an active-site residue. Residues His-300 and Glu-361 each contribute to the Zn(2+) site. A disulfide bridge links Cys-376 with Cys-434.

This sequence belongs to the peptidase M48 family. Homooligomer. It depends on Zn(2+) as a cofactor. Autocatalytically cleaved in response to mitochondrial depolarization both at the N-terminus and C-terminus to generate the short active form (S-OMA1). The S-OMA1 form is unstable. Post-translationally, may form a redox-dependent disulfide bond. Exists in a semi-oxidized state and is activated by prolonged hypoxia.

It is found in the mitochondrion inner membrane. Protease activity is activated upon autocatalytic cleavage in response to mitochondrial depolarization. In terms of biological role, metalloprotease that is part of the quality control system in the inner membrane of mitochondria. Activated in response to various mitochondrial stress, leading to the proteolytic cleavage of target proteins, such as opa1 and dele1. Involved in the fusion of the mitochondrial inner membranes by mediating cleavage of opa1 at S1 position, generating the soluble opa1 (S-opa1), which cooperates with the membrane form (L-opa1) to coordinate the fusion of mitochondrial inner membranes. Following stress conditions that induce loss of mitochondrial membrane potential, mediates cleavage of opa1, leading to excess production of soluble opa1 (S-opa1) and negative regulation of mitochondrial fusion. Also acts as an activator of the integrated stress response (ISR): in response to mitochondrial stress, mediates cleavage of dele1 to generate the processed form of dele1 (S-DELE1), which translocates to the cytosol and activates eif2ak1/hri to trigger the ISR. Required for the stability of the respiratory supercomplexes. The sequence is that of Metalloendopeptidase OMA1, mitochondrial from Danio rerio (Zebrafish).